Reading from the N-terminus, the 149-residue chain is Transcriptional repressor NrdR (149 aa).

A zinc finger spans residues 3-34 (CPFCSATDTKVIDSRLVADGHQVRRRRECAEC). The ATP-cone domain occupies 49–139 (PRVVKQDGSR…VYRAFEDVSE (91 aa)).

It belongs to the NrdR family. The cofactor is Zn(2+).

In terms of biological role, negatively regulates transcription of bacterial ribonucleotide reductase nrd genes and operons by binding to NrdR-boxes. The sequence is that of Transcriptional repressor NrdR from Shewanella woodyi (strain ATCC 51908 / MS32).